Consider the following 252-residue polypeptide: 3-deoxy-manno-octulosonate cytidylyltransferase (252 aa).

This sequence belongs to the KdsB family.

It is found in the cytoplasm. The catalysed reaction is 3-deoxy-alpha-D-manno-oct-2-ulosonate + CTP = CMP-3-deoxy-beta-D-manno-octulosonate + diphosphate. The protein operates within nucleotide-sugar biosynthesis; CMP-3-deoxy-D-manno-octulosonate biosynthesis; CMP-3-deoxy-D-manno-octulosonate from 3-deoxy-D-manno-octulosonate and CTP: step 1/1. It participates in bacterial outer membrane biogenesis; lipopolysaccharide biosynthesis. In terms of biological role, activates KDO (a required 8-carbon sugar) for incorporation into bacterial lipopolysaccharide in Gram-negative bacteria. The sequence is that of 3-deoxy-manno-octulosonate cytidylyltransferase from Xylella fastidiosa (strain Temecula1 / ATCC 700964).